Here is a 441-residue protein sequence, read N- to C-terminus: Probable cytosolic Fe-S cluster assembly factor v1g210509 (441 aa).

[4Fe-4S] cluster is bound by residues cysteine 24, cysteine 72, cysteine 75, cysteine 78, cysteine 196, cysteine 252, and cysteine 401.

Belongs to the NARF family.

Functionally, component of the cytosolic iron-sulfur (Fe/S) protein assembly machinery. Required for maturation of extramitochondrial Fe/S proteins. In Nematostella vectensis (Starlet sea anemone), this protein is Probable cytosolic Fe-S cluster assembly factor v1g210509.